The sequence spans 121 residues: MSLTNEQIVDAIAEKSLMEVMELVKAIEEKFGVSAAAPVAAAAAGPAAVVEEQTEFNVVLTNCGTNKVGVIKAVRAVTGLGLKEAKDLTEAGGMLKEGASKDEAEKIKKELTEAGATVEIK.

This sequence belongs to the bacterial ribosomal protein bL12 family. In terms of assembly, homodimer. Part of the ribosomal stalk of the 50S ribosomal subunit. Forms a multimeric L10(L12)X complex, where L10 forms an elongated spine to which 2 to 4 L12 dimers bind in a sequential fashion. Binds GTP-bound translation factors.

In terms of biological role, forms part of the ribosomal stalk which helps the ribosome interact with GTP-bound translation factors. Is thus essential for accurate translation. In Xanthomonas axonopodis pv. citri (strain 306), this protein is Large ribosomal subunit protein bL12.